Here is a 256-residue protein sequence, read N- to C-terminus: Lysine-rich coiled-coil protein 1 (256 aa).

Disordered regions lie at residues 62–84 (RLPSGTNHSYPRSCSSSQTEDRV) and 144–256 (TIDP…ILGF). A compositionally biased stretch (polar residues) spans 64–79 (PSGTNHSYPRSCSSSQ). 2 stretches are compositionally biased toward basic and acidic residues: residues 161–188 (HVEEGREKQEERPKHERKRSSEEMDLNK) and 218–227 (KTRDVSSKKE). The stretch at 209–247 (EKLKNRKEKKTRDVSSKKEDRKRRKEKKEQGEERTEEEM) forms a coiled coil.

The protein is Lysine-rich coiled-coil protein 1 (Krcc1) of Mus musculus (Mouse).